A 324-amino-acid polypeptide reads, in one-letter code: Quinolinate synthase (324 aa).

Iminosuccinate contacts are provided by His39 and Ser56. Cys101 is a [4Fe-4S] cluster binding site. Residues 127-129 and Ser144 each bind iminosuccinate; that span reads YIN. Cys187 provides a ligand contact to [4Fe-4S] cluster. Iminosuccinate-binding positions include 213–215 and Thr230; that span reads HPE. Cys280 provides a ligand contact to [4Fe-4S] cluster.

Belongs to the quinolinate synthase family. Type 2 subfamily. The cofactor is [4Fe-4S] cluster.

Its subcellular location is the cytoplasm. The catalysed reaction is iminosuccinate + dihydroxyacetone phosphate = quinolinate + phosphate + 2 H2O + H(+). Its pathway is cofactor biosynthesis; NAD(+) biosynthesis; quinolinate from iminoaspartate: step 1/1. Its function is as follows. Catalyzes the condensation of iminoaspartate with dihydroxyacetone phosphate to form quinolinate. This Trichormus variabilis (strain ATCC 29413 / PCC 7937) (Anabaena variabilis) protein is Quinolinate synthase.